Consider the following 791-residue polypeptide: Probable phosphoketolase (791 aa).

Belongs to the XFP family. Thiamine diphosphate is required as a cofactor.

The polypeptide is Probable phosphoketolase (Chlorobaculum tepidum (strain ATCC 49652 / DSM 12025 / NBRC 103806 / TLS) (Chlorobium tepidum)).